Consider the following 70-residue polypeptide: Sec-independent protein translocase protein TatA (70 aa).

A helical membrane pass occupies residues 1 to 21 (MFGLGGQELILILLIILLLFG). Positions 50–62 (FNKVVDEPPRKTP) are enriched in basic and acidic residues. Residues 50-70 (FNKVVDEPPRKTPENSTGSKS) form a disordered region.

The protein belongs to the TatA/E family. In terms of assembly, forms a complex with TatC.

The protein resides in the cell inner membrane. Functionally, part of the twin-arginine translocation (Tat) system that transports large folded proteins containing a characteristic twin-arginine motif in their signal peptide across membranes. TatA could form the protein-conducting channel of the Tat system. This chain is Sec-independent protein translocase protein TatA, found in Chlorobium limicola (strain DSM 245 / NBRC 103803 / 6330).